Reading from the N-terminus, the 224-residue chain is 7-cyano-7-deazaguanine synthase (224 aa).

L10 to V20 serves as a coordination point for ATP. Residues C189, C199, C202, and C205 each contribute to the Zn(2+) site.

It belongs to the QueC family. Zn(2+) is required as a cofactor.

The catalysed reaction is 7-carboxy-7-deazaguanine + NH4(+) + ATP = 7-cyano-7-deazaguanine + ADP + phosphate + H2O + H(+). It participates in purine metabolism; 7-cyano-7-deazaguanine biosynthesis. Functionally, catalyzes the ATP-dependent conversion of 7-carboxy-7-deazaguanine (CDG) to 7-cyano-7-deazaguanine (preQ(0)). The chain is 7-cyano-7-deazaguanine synthase from Pseudomonas aeruginosa (strain LESB58).